We begin with the raw amino-acid sequence, 492 residues long: Fascin-2 (492 aa).

This sequence belongs to the fascin family. Localized specifically in the outer and inner segments of the photoreceptor cells in the retina.

It localises to the cytoplasm. It is found in the cytoskeleton. The protein resides in the cell projection. The protein localises to the stereocilium. Its function is as follows. Acts as an actin bundling protein. May play a pivotal role in photoreceptor cell-specific events, such as disk morphogenesis. The polypeptide is Fascin-2 (FSCN2) (Homo sapiens (Human)).